Here is a 630-residue protein sequence, read N- to C-terminus: Polyphenol oxidase A, chloroplastic (630 aa).

The tract at residues 1-25 (MASLCSNSSSTSLKTPFTSSTTCLS) is disordered. The transit peptide at 1 to 87 (MASLCSNSSS…ANAIPLAASA (87 aa)) directs the protein to the chloroplast. 2 cysteine pairs are disulfide-bonded: cysteine 98–cysteine 114 and cysteine 113–cysteine 181. Cu cation contacts are provided by histidine 180, histidine 198, histidine 207, histidine 328, histidine 332, and histidine 370. The 2'-(S-cysteinyl)-histidine (Cys-His) cross-link spans 184–198 (CNGGYSIDGKVLQVH).

The protein belongs to the tyrosinase family. It depends on Cu(2+) as a cofactor.

Its subcellular location is the plastid. The protein localises to the chloroplast thylakoid lumen. The enzyme catalyses 2 catechol + O2 = 2 1,2-benzoquinone + 2 H2O. Its function is as follows. Catalyzes the oxidation of mono- and o-diphenols to o-diquinones. This chain is Polyphenol oxidase A, chloroplastic, found in Solanum lycopersicum (Tomato).